A 376-amino-acid chain; its full sequence is Cytochrome b (376 aa).

The next 4 helical transmembrane spans lie at 28-48 (YGFL…FLAS), 72-94 (WCFR…LHIL), 107-127 (SWIS…IGYV), and 169-189 (FFVL…IHIF). 2 residues coordinate heme b: H78 and H92. Positions 173 and 187 each coordinate heme b. H192 is a binding site for a ubiquinone. 4 helical membrane passes run 214–234 (LLSL…IQSI), 274–294 (IPSK…LFLL), 317–337 (VPII…CQLP), and 340–360 (IFIL…LFAL).

This sequence belongs to the cytochrome b family. The main subunits of complex b-c1 are: cytochrome b, cytochrome c1 and the Rieske protein. It depends on heme b as a cofactor.

Its subcellular location is the mitochondrion inner membrane. Its function is as follows. Component of the ubiquinol-cytochrome c reductase complex (complex III or cytochrome b-c1 complex) that is part of the mitochondrial respiratory chain. The b-c1 complex mediates electron transfer from ubiquinol to cytochrome c. Contributes to the generation of a proton gradient across the mitochondrial membrane that is then used for ATP synthesis. The sequence is that of Cytochrome b (MT-CYB) from Plasmodium chabaudi.